Reading from the N-terminus, the 261-residue chain is Tryptophan synthase alpha chain (261 aa).

Residues Glu47 and Asp58 each act as proton acceptor in the active site.

Belongs to the TrpA family. Tetramer of two alpha and two beta chains.

It catalyses the reaction (1S,2R)-1-C-(indol-3-yl)glycerol 3-phosphate + L-serine = D-glyceraldehyde 3-phosphate + L-tryptophan + H2O. It functions in the pathway amino-acid biosynthesis; L-tryptophan biosynthesis; L-tryptophan from chorismate: step 5/5. Its function is as follows. The alpha subunit is responsible for the aldol cleavage of indoleglycerol phosphate to indole and glyceraldehyde 3-phosphate. The chain is Tryptophan synthase alpha chain from Neisseria gonorrhoeae (strain ATCC 700825 / FA 1090).